A 237-amino-acid chain; its full sequence is V-type proton ATPase subunit E (237 aa).

It belongs to the V-ATPase E subunit family. In terms of assembly, V-ATPase is a heteromultimeric enzyme composed of a peripheral catalytic V1 complex (components A to H) attached to an integral membrane V0 proton pore complex (components: a, c, c', c'' and d).

Subunit of the peripheral V1 complex of vacuolar ATPase essential for assembly or catalytic function. V-ATPase is responsible for acidifying a variety of intracellular compartments in eukaryotic cells. In Gossypium hirsutum (Upland cotton), this protein is V-type proton ATPase subunit E (VATE).